The chain runs to 457 residues: Argininosuccinate lyase (457 aa).

This sequence belongs to the lyase 1 family. Argininosuccinate lyase subfamily.

It localises to the cytoplasm. It carries out the reaction 2-(N(omega)-L-arginino)succinate = fumarate + L-arginine. Its pathway is amino-acid biosynthesis; L-arginine biosynthesis; L-arginine from L-ornithine and carbamoyl phosphate: step 3/3. The chain is Argininosuccinate lyase from Yersinia pseudotuberculosis serotype O:3 (strain YPIII).